Here is a 104-residue protein sequence, read N- to C-terminus: NADH-quinone oxidoreductase subunit K (104 aa).

The next 3 helical transmembrane spans lie at valine 4–alanine 24, valine 31–phenylalanine 51, and leucine 67–leucine 87.

This sequence belongs to the complex I subunit 4L family. In terms of assembly, NDH-1 is composed of 14 different subunits. Subunits NuoA, H, J, K, L, M, N constitute the membrane sector of the complex.

The protein resides in the cell membrane. The enzyme catalyses a quinone + NADH + 5 H(+)(in) = a quinol + NAD(+) + 4 H(+)(out). NDH-1 shuttles electrons from NADH, via FMN and iron-sulfur (Fe-S) centers, to quinones in the respiratory chain. The immediate electron acceptor for the enzyme in this species is believed to be a menaquinone. Couples the redox reaction to proton translocation (for every two electrons transferred, four hydrogen ions are translocated across the cytoplasmic membrane), and thus conserves the redox energy in a proton gradient. This chain is NADH-quinone oxidoreductase subunit K, found in Bacillus cereus (strain AH187).